Consider the following 307-residue polypeptide: 4-diphosphocytidyl-2-C-methyl-D-erythritol kinase (307 aa).

Residue K14 is part of the active site. Position 107–117 (107–117 (PVAGGMAGGSA)) interacts with ATP. D149 is a catalytic residue.

This sequence belongs to the GHMP kinase family. IspE subfamily.

The enzyme catalyses 4-CDP-2-C-methyl-D-erythritol + ATP = 4-CDP-2-C-methyl-D-erythritol 2-phosphate + ADP + H(+). The protein operates within isoprenoid biosynthesis; isopentenyl diphosphate biosynthesis via DXP pathway; isopentenyl diphosphate from 1-deoxy-D-xylulose 5-phosphate: step 3/6. Its function is as follows. Catalyzes the phosphorylation of the position 2 hydroxy group of 4-diphosphocytidyl-2C-methyl-D-erythritol. This is 4-diphosphocytidyl-2-C-methyl-D-erythritol kinase from Thermobifida fusca (strain YX).